A 156-amino-acid chain; its full sequence is MAKYTISKHRLEELQLELREILDVKWPAITKQLQDAREQGDLSENADYDAAKNEQAALKKRKDEIEEILENYELIEDVLRSTDEVSIGSTIEIYNYQKDCEEVITLVGSMDSDPFANKISIDTPLGKALVKQKKGTEVTVHTLASPYKVKIIKIID.

The stretch at 1–84 (MAKYTISKHR…IEDVLRSTDE (84 aa)) forms a coiled coil.

Belongs to the GreA/GreB family.

Functionally, necessary for efficient RNA polymerase transcription elongation past template-encoded arresting sites. The arresting sites in DNA have the property of trapping a certain fraction of elongating RNA polymerases that pass through, resulting in locked ternary complexes. Cleavage of the nascent transcript by cleavage factors such as GreA or GreB allows the resumption of elongation from the new 3'terminus. GreA releases sequences of 2 to 3 nucleotides. This is Transcription elongation factor GreA from Ureaplasma parvum serovar 3 (strain ATCC 27815 / 27 / NCTC 11736).